A 365-amino-acid polypeptide reads, in one-letter code: Selina-4(15),7(11)-diene synthase ((2E,6E)-farnesyl diphosphate cyclizing) (365 aa).

Mg(2+)-binding residues include Asp82 and Glu87. The DDXXXE motif motif lies at 82–87; sequence DDGHCE. Arg178 is a binding site for substrate. Positions 224 and 228 each coordinate Mg(2+). Lys231 is a binding site for substrate. Glu232 contacts Mg(2+). Residue 310–311 participates in substrate binding; sequence RY.

This sequence belongs to the terpene synthase family. Monomer. Mg(2+) serves as cofactor.

It carries out the reaction (2E,6E)-farnesyl diphosphate = selina-4(15),7(11)-diene + diphosphate. Its pathway is secondary metabolite biosynthesis; terpenoid biosynthesis. In terms of biological role, catalyzes the conversion of (2E,6E)-farnesyl diphosphate (FPP) to yield the bicyclic sesquiterpene selina-4(15),7(11)-diene via a 1,10-cyclization, which requires the abstraction of the pyrophosphate from FPP leading to a (E,E)-germacradienyl cation. The only accepted substrate is (2E,6E)-farnesyl diphosphate (FPP). The protein is Selina-4(15),7(11)-diene synthase ((2E,6E)-farnesyl diphosphate cyclizing) of Streptomyces pristinaespiralis (strain ATCC 25486 / DSM 40338 / CBS 914.69 / JCM 4507 / KCC S-0507 / NBRC 13074 / NRRL 2958 / 5647).